The following is a 255-amino-acid chain: Thiazole synthase (255 aa).

The active-site Schiff-base intermediate with DXP is the lysine 96. Residues glycine 157, 183-184 (AG), and 205-206 (NT) each bind 1-deoxy-D-xylulose 5-phosphate.

The protein belongs to the ThiG family. In terms of assembly, homotetramer. Forms heterodimers with either ThiH or ThiS.

It localises to the cytoplasm. The catalysed reaction is [ThiS sulfur-carrier protein]-C-terminal-Gly-aminoethanethioate + 2-iminoacetate + 1-deoxy-D-xylulose 5-phosphate = [ThiS sulfur-carrier protein]-C-terminal Gly-Gly + 2-[(2R,5Z)-2-carboxy-4-methylthiazol-5(2H)-ylidene]ethyl phosphate + 2 H2O + H(+). The protein operates within cofactor biosynthesis; thiamine diphosphate biosynthesis. Functionally, catalyzes the rearrangement of 1-deoxy-D-xylulose 5-phosphate (DXP) to produce the thiazole phosphate moiety of thiamine. Sulfur is provided by the thiocarboxylate moiety of the carrier protein ThiS. In vitro, sulfur can be provided by H(2)S. This is Thiazole synthase from Geobacillus sp. (strain WCH70).